The sequence spans 406 residues: tRNA-specific 2-thiouridylase MnmA (406 aa).

ATP-binding positions include 6–13 (AMSGGVDS) and leucine 32. Cysteine 101 acts as the Nucleophile in catalysis. An intrachain disulfide couples cysteine 101 to cysteine 193. Position 125 (glycine 125) interacts with ATP. Positions 143 to 145 (KDQ) are interaction with tRNA. Cysteine 193 serves as the catalytic Cysteine persulfide intermediate. A disordered region spans residues 378-406 (GAPIEEQPAPGTVGAVDADAIEQGEDAQR). The span at 396-406 (DAIEQGEDAQR) shows a compositional bias: acidic residues.

It belongs to the MnmA/TRMU family.

The protein resides in the cytoplasm. It catalyses the reaction S-sulfanyl-L-cysteinyl-[protein] + uridine(34) in tRNA + AH2 + ATP = 2-thiouridine(34) in tRNA + L-cysteinyl-[protein] + A + AMP + diphosphate + H(+). Functionally, catalyzes the 2-thiolation of uridine at the wobble position (U34) of tRNA, leading to the formation of s(2)U34. The polypeptide is tRNA-specific 2-thiouridylase MnmA (Corynebacterium urealyticum (strain ATCC 43042 / DSM 7109)).